A 269-amino-acid polypeptide reads, in one-letter code: GTP cyclohydrolase FolE2 (269 aa).

This sequence belongs to the GTP cyclohydrolase IV family.

The enzyme catalyses GTP + H2O = 7,8-dihydroneopterin 3'-triphosphate + formate + H(+). The protein operates within cofactor biosynthesis; 7,8-dihydroneopterin triphosphate biosynthesis; 7,8-dihydroneopterin triphosphate from GTP: step 1/1. Converts GTP to 7,8-dihydroneopterin triphosphate. The polypeptide is GTP cyclohydrolase FolE2 (Burkholderia ambifaria (strain ATCC BAA-244 / DSM 16087 / CCUG 44356 / LMG 19182 / AMMD) (Burkholderia cepacia (strain AMMD))).